The chain runs to 396 residues: Putative 2-hydroxyacid dehydrogenase YPL113C (396 aa).

NAD(+) is bound by residues 227–228, 311–313, and D337; these read SI and VGR. Residue R313 is part of the active site. E342 is a catalytic residue. The Proton donor role is filled by H361. Residue 361–364 coordinates NAD(+); the sequence is HIGS.

This sequence belongs to the D-isomer specific 2-hydroxyacid dehydrogenase family.

Functionally, putative 2-hydroxyacid dehydrogenase. In Saccharomyces cerevisiae (strain ATCC 204508 / S288c) (Baker's yeast), this protein is Putative 2-hydroxyacid dehydrogenase YPL113C.